The sequence spans 304 residues: m7GpppX diphosphatase (304 aa).

Substrate is bound by residues Glu152, Lys174, and 235 to 246; that span reads HYLPSYYHLHVH. The Histidine triad motif motif lies at 242-246; sequence HLHVH. Catalysis depends on His244, which acts as the Nucleophile.

Belongs to the HIT family.

The protein resides in the cytoplasm. It is found in the nucleus. The catalysed reaction is a 5'-end (N(7)-methyl 5'-triphosphoguanosine)-ribonucleoside in mRNA + H2O = N(7)-methyl-GMP + a 5'-end diphospho-ribonucleoside in mRNA + 2 H(+). Its function is as follows. Decapping scavenger enzyme that catalyzes the cleavage of a residual cap structure following the degradation of mRNAs by the 3'-&gt;5' exosome-mediated mRNA decay pathway. Hydrolyzes cap analog structures like 7-methylguanosine nucleoside triphosphate (m7GpppG) with up to 10 nucleotide substrates (small capped oligoribonucleotides) and specifically releases 5'-phosphorylated RNA fragments and 7-methylguanosine monophosphate (m7GMP). Has no activity towards mRNA molecules longer than 25 nucleotides. May also play a role in the 5'-&gt;3 mRNA decay pathway; m7GDP, the downstream product released by the 5'-&gt;3' mRNA mediated decapping activity, may be also converted by DCS1 to m7GMP. Inhibits mRNA translation. Binds to the m7GpppG cap analog. This chain is m7GpppX diphosphatase (nhm1), found in Schizosaccharomyces pombe (strain 972 / ATCC 24843) (Fission yeast).